The chain runs to 166 residues: Large ribosomal subunit protein mL41 (166 aa).

The transit peptide at 1-26 (MNNCIKVVPIALRCQQRTISTSSVLE) directs the protein to the mitochondrion. Positions 136–166 (KDGSAKEPSVNEQLTPEEALQRARKTGSDIF) are disordered.

The protein belongs to the mitochondrion-specific ribosomal protein mL41 family. In terms of assembly, component of the mitochondrial ribosome large subunit (39S) which comprises a 16S rRNA and about 50 distinct proteins.

Its subcellular location is the mitochondrion. This chain is Large ribosomal subunit protein mL41 (mRpL41), found in Drosophila melanogaster (Fruit fly).